The chain runs to 174 residues: uncharacterized protein (174 aa).

This is an uncharacterized protein from Rickettsia conorii (strain ATCC VR-613 / Malish 7).